Reading from the N-terminus, the 360-residue chain is 3-dehydroquinate synthase (360 aa).

NAD(+)-binding positions include 69-74 (DGEKYK), 103-107 (GVVGD), 127-128 (TT), Lys140, Lys149, and 167-170 (TLDT). Residues Glu182, His246, and His263 each coordinate Zn(2+).

Belongs to the sugar phosphate cyclases superfamily. Dehydroquinate synthase family. The cofactor is Co(2+). Requires Zn(2+) as cofactor. It depends on NAD(+) as a cofactor.

Its subcellular location is the cytoplasm. The enzyme catalyses 7-phospho-2-dehydro-3-deoxy-D-arabino-heptonate = 3-dehydroquinate + phosphate. Its pathway is metabolic intermediate biosynthesis; chorismate biosynthesis; chorismate from D-erythrose 4-phosphate and phosphoenolpyruvate: step 2/7. In terms of biological role, catalyzes the conversion of 3-deoxy-D-arabino-heptulosonate 7-phosphate (DAHP) to dehydroquinate (DHQ). In Vesicomyosocius okutanii subsp. Calyptogena okutanii (strain HA), this protein is 3-dehydroquinate synthase.